The primary structure comprises 77 residues: Apelin (77 aa).

A signal peptide spans 1-22 (MNLRRCVQALLLLWLCLSAVCG). Positions 23 to 41 (GPLLQTSDGKEMEEGTIRY) are excised as a propeptide. Residues 43 to 77 (VQPRGPRSGPGPWQGGRRKFRRQRPRLSHKGPMPF) are disordered. Residues 58-71 (GRRKFRRQRPRLSH) are compositionally biased toward basic residues. Q65 is subject to Pyrrolidone carboxylic acid.

This sequence belongs to the apelin family. In terms of processing, at least 5 active peptides may be produced by proteolytic processing of the peptide precursor.

It localises to the secreted. The protein localises to the extracellular space. Peptide hormone that functions as endogenous ligand for the G-protein-coupled apelin receptor (APLNR/APJ), that plays a role in cadiovascular homeostasis. Functions as a balanced agonist activating both G(i) protein pathway and beta-arrestin pathway of APLNR. Downstream G proteins activation, apelin can inhibit cAMP production and activate key intracellular effectors such as ERKs. On the other hand, APLNR activation induces beta-arrestin recruitment to the membrane leading to desensitization and internalization of the receptor. Apelin blunts cardiac hypertrophic induction from APLNR on response to pathological stimuli, but also induces myocardial hypertrophy under normal conditions. Apelin-36 dissociates more hardly than (pyroglu)apelin-13 from APLNR. Involved in the regulation of cardiac precursor cell movements during gastrulation and heart morphogenesis. Has an inhibitory effect on cytokine production in response to T-cell receptor/CD3 cross-linking; the oral intake of apelin in the colostrum and the milk might therefore modulate immune responses in neonates. Plays a role in early coronary blood vessels formation. Mediates myocardial contractility in an ERK1/2-dependent manner. May also have a role in the central control of body fluid homeostasis by influencing vasopressin release and drinking behavior. This Bos taurus (Bovine) protein is Apelin (APLN).